The sequence spans 385 residues: uncharacterized protein (385 aa).

The protein belongs to the peptidase M20 family.

This is an uncharacterized protein from Staphylococcus saprophyticus subsp. saprophyticus (strain ATCC 15305 / DSM 20229 / NCIMB 8711 / NCTC 7292 / S-41).